The chain runs to 154 residues: Low molecular weight protein-tyrosine-phosphatase PtpA (154 aa).

Cys8 acts as the Nucleophile in catalysis. Arg14 is a catalytic residue. Catalysis depends on Asp120, which acts as the Proton donor.

The protein belongs to the low molecular weight phosphotyrosine protein phosphatase family. As to quaternary structure, interacts with host CORO1A. In terms of processing, phosphorylations at Tyr-122 and Tyr-123 are essential for phosphatase activity.

The protein resides in the secreted. The enzyme catalyses O-phospho-L-tyrosyl-[protein] + H2O = L-tyrosyl-[protein] + phosphate. In terms of biological role, secreted tyrosine phosphatase that plays a critical role during infection as a bacterial effector protein that counteracts host defenses. Required for intramacrophage survival. This is Low molecular weight protein-tyrosine-phosphatase PtpA (ptpA) from Staphylococcus aureus (strain MSSA476).